The primary structure comprises 513 residues: GMP synthase [glutamine-hydrolyzing] (513 aa).

The region spanning serine 3 to aspartate 200 is the Glutamine amidotransferase type-1 domain. Catalysis depends on cysteine 80, which acts as the Nucleophile. Residues histidine 174 and glutamate 176 contribute to the active site. Residues tryptophan 201 to arginine 388 enclose the GMPS ATP-PPase domain. Serine 228–threonine 234 is a binding site for ATP.

As to quaternary structure, homodimer.

The enzyme catalyses XMP + L-glutamine + ATP + H2O = GMP + L-glutamate + AMP + diphosphate + 2 H(+). The protein operates within purine metabolism; GMP biosynthesis; GMP from XMP (L-Gln route): step 1/1. Functionally, catalyzes the synthesis of GMP from XMP. The polypeptide is GMP synthase [glutamine-hydrolyzing] (Pelodictyon phaeoclathratiforme (strain DSM 5477 / BU-1)).